Here is a 357-residue protein sequence, read N- to C-terminus: Homeobox protein HMX3 (357 aa).

Disordered regions lie at residues 1–58 and 129–229; these read MPEP…LFAP and LPRP…RKKK. Pro residues predominate over residues 16–27; it reads PQPPPPPPPAPK. Composition is skewed to basic and acidic residues over residues 130-140 and 149-173; these read PRPEASEKALL and TDRD…KSPD. Residues Ser-153 and Ser-180 each carry the phosphoserine modification. Positions 191–209 are enriched in low complexity; it reads AAPGAAGASVGAAAATPGA. The segment covering 210-223 has biased composition (basic and acidic residues); sequence EDWKKGAESPEKKP. Residues 227–286 constitute a DNA-binding region (homeobox); that stretch reads KKKTRTVFSRSQVFQLESTFDMKRYLSSSERAGLAASLHLTETQVKIWFQNRRNKWKRQL.

The protein belongs to the HMX homeobox family.

Its subcellular location is the nucleus. In terms of biological role, transcription factor involved in specification of neuronal cell types and which is required for inner ear and hypothalamus development. Binds to the 5'-CAAGTG-3' core sequence. Controls semicircular canal formation in the inner ear. Also required for hypothalamic/pituitary axis of the CNS. This chain is Homeobox protein HMX3 (HMX3), found in Homo sapiens (Human).